The chain runs to 393 residues: S-adenosylmethionine synthase 4 (393 aa).

Glu-9 contacts Mg(2+). ATP is bound at residue His-15. K(+) is bound at residue Glu-43. L-methionine is bound by residues Glu-56 and Gln-99. ATP-binding positions include 167–169, 235–238, Asp-246, 252–253, Ala-269, Lys-273, and Lys-277; these read DGK, SGRF, and RK. Asp-246 is a binding site for L-methionine. Lys-277 serves as a coordination point for L-methionine.

It belongs to the AdoMet synthase family. In terms of assembly, homotetramer. It depends on Mn(2+) as a cofactor. Mg(2+) serves as cofactor. Co(2+) is required as a cofactor. Requires K(+) as cofactor. As to expression, detected in trichomes (at the protein level).

Its subcellular location is the cytoplasm. It catalyses the reaction L-methionine + ATP + H2O = S-adenosyl-L-methionine + phosphate + diphosphate. The protein operates within amino-acid biosynthesis; S-adenosyl-L-methionine biosynthesis; S-adenosyl-L-methionine from L-methionine: step 1/1. Catalyzes the formation of S-adenosylmethionine from methionine and ATP. The reaction comprises two steps that are both catalyzed by the same enzyme: formation of S-adenosylmethionine (AdoMet) and triphosphate, and subsequent hydrolysis of the triphosphate. The chain is S-adenosylmethionine synthase 4 (METK4) from Arabidopsis thaliana (Mouse-ear cress).